The sequence spans 232 residues: Small ribosomal subunit protein uS3 (232 aa).

Residues 39–107 (IREILHKELK…DVVINIVEIR (69 aa)) form the KH type-2 domain.

Belongs to the universal ribosomal protein uS3 family. As to quaternary structure, part of the 30S ribosomal subunit. Forms a tight complex with proteins S10 and S14.

Functionally, binds the lower part of the 30S subunit head. Binds mRNA in the 70S ribosome, positioning it for translation. The sequence is that of Small ribosomal subunit protein uS3 from Rhodopseudomonas palustris (strain HaA2).